A 279-amino-acid chain; its full sequence is Probable endonuclease 4 (279 aa).

Positions 69, 109, 145, 179, 182, 216, 229, 231, and 261 each coordinate Zn(2+).

This sequence belongs to the AP endonuclease 2 family. Requires Zn(2+) as cofactor.

The enzyme catalyses Endonucleolytic cleavage to 5'-phosphooligonucleotide end-products.. Endonuclease IV plays a role in DNA repair. It cleaves phosphodiester bonds at apurinic or apyrimidinic (AP) sites, generating a 3'-hydroxyl group and a 5'-terminal sugar phosphate. The protein is Probable endonuclease 4 of Buchnera aphidicola subsp. Schizaphis graminum (strain Sg).